A 997-amino-acid polypeptide reads, in one-letter code: Sarcoplasmic/endoplasmic reticulum calcium ATPase 2 (997 aa).

Residues 1–48 (MENAHTKTVEEVLGYFGVNESTGLSLEQVKKLKERWGSNELPAEEGKT) lie on the Cytoplasmic side of the membrane. At serine 38 the chain carries Phosphoserine. The chain crosses the membrane as a helical span at residues 49 to 69 (LLELVIEQFEDLLVRILLLAA). The Lumenal segment spans residues 70 to 89 (CISFVLAWFEEGEETITAFV). A helical membrane pass occupies residues 90 to 110 (EPFVILLILVANAIVGVWQER). At 111 to 253 (NAENAIEALK…QERTPLQQKL (143 aa)) the chain is on the cytoplasmic side. Residues 254-273 (DEFGEQLSKVISLICIAVWI) form a helical membrane-spanning segment. Over 274–295 (INIGHFNDPVHGGSWIRGAIYY) the chain is Lumenal. 2 positions are modified to 3'-nitrotyrosine: tyrosine 294 and tyrosine 295. A helical membrane pass occupies residues 296–313 (FKIAVALAVAAIPEGLPA). Ca(2+)-binding residues include valine 304, alanine 305, isoleucine 307, and glutamate 309. Over 314–756 (VITTCLALGT…EEGRAIYNNM (443 aa)) the chain is Cytoplasmic. Aspartate 351 (4-aspartylphosphate intermediate) is an active-site residue. 2 residues coordinate Mg(2+): aspartate 351 and threonine 353. Residue threonine 353 participates in ATP binding. The residue at position 441 (threonine 441) is a Phosphothreonine. ATP is bound by residues glutamate 442, arginine 489, and lysine 514. Phosphoserine is present on serine 531. Residue arginine 559 participates in ATP binding. The interaction with HAX1 stretch occupies residues 575–594 (MNLEDSANFIKYETNLTFVG). Position 580 is a phosphoserine (serine 580). Positions 624, 625, and 626 each coordinate ATP. Phosphoserine occurs at positions 661 and 663. ATP contacts are provided by arginine 677 and lysine 683. Aspartate 702 is a binding site for Mg(2+). Asparagine 705 is an ATP binding site. The chain crosses the membrane as a helical span at residues 757–776 (KQFIRYLISSNVGEVVCIFL). Ca(2+)-binding residues include asparagine 767 and glutamate 770. The Lumenal segment spans residues 777 to 786 (TAALGFPEAL). Residues 787-807 (IPVQLLWVNLVTDGLPATALG) form a helical membrane-spanning segment. The tract at residues 787-807 (IPVQLLWVNLVTDGLPATALG) is interaction with PLN. Positions 788–997 (PVQLLWVNLV…RNYLEPAILE (210 aa)) are interaction with TMEM64 and PDIA3. Ca(2+) is bound by residues asparagine 795, threonine 798, and aspartate 799. Topologically, residues 808-827 (FNPPDLDIMNKPPRNPKEPL) are cytoplasmic. The chain crosses the membrane as a helical span at residues 828–850 (ISGWLFFRYLAIGCYVGAATVGA). Topologically, residues 851–896 (AAWWFIAADGGPRVSFYQLSHFLQCKDDNPDFEGVDCAIFESPYPM) are lumenal. A disulfide bond links cysteine 875 and cysteine 887. The helical transmembrane segment at 897 to 916 (TMALSVLVTIEMCNALNSLS) threads the bilayer. Glutamate 907 contacts Ca(2+). Residues 917-929 (ENQSLLRMPPWEN) are Cytoplasmic-facing. Residues 930–948 (IWLVGSICLSMSLHFLILY) traverse the membrane as a helical segment. The tract at residues 931-942 (WLVGSICLSMSL) is interaction with PLN. Residues 949–963 (VEPLPLIFQITPLNL) lie on the Lumenal side of the membrane. A helical transmembrane segment spans residues 964–984 (TQWLMVLKISLPVILMDETLK). Topologically, residues 985 to 997 (FVARNYLEPAILE) are cytoplasmic.

The protein belongs to the cation transport ATPase (P-type) (TC 3.A.3) family. Type IIA subfamily. Interacts with sarcolipin (SLN); the interaction inhibits ATP2A2 Ca(2+) affinity. Interacts with phospholamban (PLN); the interaction inhibits ATP2A2 Ca(2+) affinity. Interacts with myoregulin (MRLN). Interacts with ARLN and ERLN; the interactions inhibit ATP2A2 Ca(2+) affinity. Interacts with STRIT1/DWORF; the interaction results in activation of ATP2A2. Interacts with the monomeric forms of SLN, PLN, ARLN, ERLN and STRI1/DWORF. Interacts with HAX1. Interacts with S100A8 and S100A9. Interacts with SLC35G1 and STIM1. Interacts with TMEM203. Interacts with TMEM64 and PDIA3. Interacts with TMX1. Interacts with TMX2. Interacts with VMP1; VMP1 competes with PLN and SLN to prevent them from forming an inhibitory complex with ATP2A2. Interacts with ULK1. Interacts with S100A1 in a Ca(2+)-dependent manner. Interacts with TUNAR. Interacts with FLVCR2; this interaction occurs in the absence of heme and promotes ATP2A2 proteasomal degradation; this complex is dissociated upon heme binding. Interacts with FNIP1. In terms of assembly, interacts with TRAM2 (via C-terminus). It depends on Mg(2+) as a cofactor. Post-translationally, nitrated under oxidative stress. Nitration on the two tyrosine residues inhibits catalytic activity. In terms of processing, serotonylated on Gln residues by TGM2 in response to hypoxia, leading to its inactivation. In terms of tissue distribution, isoform 1 is expressed in the heart.

The protein localises to the endoplasmic reticulum membrane. It is found in the sarcoplasmic reticulum membrane. The enzyme catalyses Ca(2+)(in) + ATP + H2O = Ca(2+)(out) + ADP + phosphate + H(+). Has different conformational states with differential Ca2+ affinity. The E1 conformational state (active form) shows high Ca(2+) affinity, while the E2 state exhibits low Ca(2+) affinity. Binding of ATP allosterically increases its affinity for subsequent binding of Ca2+. Reversibly inhibited by phospholamban (PLN) at low calcium concentrations. PLN inhibits ATP2A2 Ca(2+) affinity by disrupting its allosteric activation by ATP. Inhibited by sarcolipin (SLN) and myoregulin (MRLN). The inhibition is blocked by VMP1. Enhanced by STRIT1/DWORF; STRIT1 increases activity by displacing sarcolipin (SLN), phospholamban (PLN) and myoregulin (MRLN). Stabilizes SERCA2 in its E2 state. In terms of biological role, this magnesium-dependent enzyme catalyzes the hydrolysis of ATP coupled with the translocation of calcium from the cytosol to the sarcoplasmic reticulum lumen. Involved in autophagy in response to starvation. Upon interaction with VMP1 and activation, controls ER-isolation membrane contacts for autophagosome formation. Also modulates ER contacts with lipid droplets, mitochondria and endosomes. In coordination with FLVCR2 mediates heme-stimulated switching from mitochondrial ATP synthesis to thermogenesis. Functionally, involved in the regulation of the contraction/relaxation cycle. Acts as a regulator of TNFSF11-mediated Ca(2+) signaling pathways via its interaction with TMEM64 which is critical for the TNFSF11-induced CREB1 activation and mitochondrial ROS generation necessary for proper osteoclast generation. Association between TMEM64 and SERCA2 in the ER leads to cytosolic Ca(2+) spiking for activation of NFATC1 and production of mitochondrial ROS, thereby triggering Ca(2+) signaling cascades that promote osteoclast differentiation and activation. The polypeptide is Sarcoplasmic/endoplasmic reticulum calcium ATPase 2 (ATP2A2) (Felis catus (Cat)).